The primary structure comprises 915 residues: Protein ZDS1 (915 aa).

Disordered regions lie at residues 1–28 (MSNR…KRKS), 69–134 (GESS…KKGV), 179–261 (LSDN…SETV), 310–330 (GSYS…EGDI), 412–433 (KSPF…SIGD), and 464–807 (KVRN…SILP). The segment covering 74-93 (RRSWSGTTSSSASMPSDTTT) has biased composition (low complexity). Over residues 115–125 (GIESSNKTKQG) the composition is skewed to polar residues. Over residues 202–212 (DKESQSYENKE) the composition is skewed to basic and acidic residues. S229 carries the phosphoserine modification. A compositionally biased stretch (acidic residues) spans 243 to 252 (EFDDNEDDDN). Residues 313 to 327 (SDKKDQPQPEGHYDE) are compositionally biased toward basic and acidic residues. A compositionally biased stretch (basic and acidic residues) spans 464–480 (KVRNDTVEQDLELREGT). Over residues 515–530 (DDNEENQGDDENEENV) the composition is skewed to acidic residues. Composition is skewed to basic and acidic residues over residues 531-541 (DSQRMELDNSK) and 552-562 (EKTEVSNKEEM). Low complexity-rich tracts occupy residues 565–574 (SSTSTATSQT) and 597–609 (SSSP…SSPS). 2 stretches are compositionally biased toward basic residues: residues 618-627 (VRVRKSKKLG) and 642-656 (NRPR…RHGS). Residues 668–679 (QPQQQIPLQPQL) are compositionally biased toward low complexity. The segment covering 696-710 (LPQLQPAVSVSSTKS) has biased composition (polar residues). Basic and acidic residues-rich tracts occupy residues 711–721 (NSRDREEEEAK) and 742–751 (VQKENTDEQK). Polar residues predominate over residues 752-793 (AQLQAPAQEQVQTSVPVQASAPVQNSAPVQTSAPVEASAQTQ).

This sequence to yeast ZDS2/MCS1. Interacts with BCY1, DBP5, GFD1 and SKG6.

It is found in the cytoplasm. Functionally, has a role in establishing cell polarity. Together with cAMP-dependent protein kinase regulatory subunit BCY1, provides a negative feedback control on the cell wall integrity-signaling pathway by acting as a negative regulator of MAP kinase SLT2/MPK1. In heat-stressed cells appears to play a role in localizing BCY1 to the cytoplasm. Seems to interact with, and down-regulate, CDC42. Also acts as a suppressor of PKC1. May act as an integration point for distinct signaling pathways helping to maintain a balance among these different pathways. Its function is as follows. When associated with DBP5, GFD1 and nucleoporins at the cytosolic fibrils of the nuclear pore complex, is required for mRNA export form the nucleus. This Saccharomyces cerevisiae (strain ATCC 204508 / S288c) (Baker's yeast) protein is Protein ZDS1 (ZDS1).